Here is a 112-residue protein sequence, read N- to C-terminus: Abdominal ganglion neuropeptides L5-67 (112 aa).

The N-terminal stretch at methionine 1–serine 23 is a signal peptide. Phenylalanine 33 is modified (phenylalanine amide).

The prohormone is proteolytically cleaved in 2 steps, yielding first 2 products: luqin and PRMP. In the second step, PRMP is cleaved to yield luqin-B and luqin-C. As to expression, neurons L2-4 and L6, also called giant dorsal LUQ (Left Upper Quadrant) neurons of the abdominal ganglion. Also expressed in smaller neurons in the CNS and in peripheral organs such as the kidney.

It is found in the secreted. This is Abdominal ganglion neuropeptides L5-67 from Aplysia californica (California sea hare).